Consider the following 106-residue polypeptide: ATP-dependent Clp protease adapter protein ClpS (106 aa).

Positions 1–13 (MPRNTSHEHDHGL) are enriched in basic and acidic residues. The segment at 1-20 (MPRNTSHEHDHGLMVEASKP) is disordered.

Belongs to the ClpS family. Binds to the N-terminal domain of the chaperone ClpA.

Its function is as follows. Involved in the modulation of the specificity of the ClpAP-mediated ATP-dependent protein degradation. In Xanthomonas axonopodis pv. citri (strain 306), this protein is ATP-dependent Clp protease adapter protein ClpS.